A 416-amino-acid polypeptide reads, in one-letter code: Gamma-glutamyl phosphate reductase (416 aa).

This sequence belongs to the gamma-glutamyl phosphate reductase family.

Its subcellular location is the cytoplasm. The enzyme catalyses L-glutamate 5-semialdehyde + phosphate + NADP(+) = L-glutamyl 5-phosphate + NADPH + H(+). It functions in the pathway amino-acid biosynthesis; L-proline biosynthesis; L-glutamate 5-semialdehyde from L-glutamate: step 2/2. Functionally, catalyzes the NADPH-dependent reduction of L-glutamate 5-phosphate into L-glutamate 5-semialdehyde and phosphate. The product spontaneously undergoes cyclization to form 1-pyrroline-5-carboxylate. The sequence is that of Gamma-glutamyl phosphate reductase from Glaesserella parasuis serovar 5 (strain SH0165) (Haemophilus parasuis).